The sequence spans 300 residues: Sulfate adenylyltransferase subunit 2 (300 aa).

A disordered region spans residues 281-300; the sequence is RAIDRDEAGSMEKKKREGYF.

Belongs to the PAPS reductase family. CysD subfamily. In terms of assembly, heterodimer composed of CysD, the smaller subunit, and CysN.

The enzyme catalyses sulfate + ATP + H(+) = adenosine 5'-phosphosulfate + diphosphate. Its pathway is sulfur metabolism; hydrogen sulfide biosynthesis; sulfite from sulfate: step 1/3. With CysN forms the ATP sulfurylase (ATPS) that catalyzes the adenylation of sulfate producing adenosine 5'-phosphosulfate (APS) and diphosphate, the first enzymatic step in sulfur assimilation pathway. APS synthesis involves the formation of a high-energy phosphoric-sulfuric acid anhydride bond driven by GTP hydrolysis by CysN coupled to ATP hydrolysis by CysD. This chain is Sulfate adenylyltransferase subunit 2, found in Brucella abortus (strain 2308).